We begin with the raw amino-acid sequence, 566 residues long: Glutamate--tRNA ligase (566 aa).

Positions 93–103 (PNPDYTIHLGN) match the 'HIGH' region motif.

The protein belongs to the class-I aminoacyl-tRNA synthetase family. Glutamate--tRNA ligase type 2 subfamily.

It is found in the cytoplasm. The catalysed reaction is tRNA(Glu) + L-glutamate + ATP = L-glutamyl-tRNA(Glu) + AMP + diphosphate. Functionally, catalyzes the attachment of glutamate to tRNA(Glu) in a two-step reaction: glutamate is first activated by ATP to form Glu-AMP and then transferred to the acceptor end of tRNA(Glu). This chain is Glutamate--tRNA ligase, found in Staphylothermus marinus (strain ATCC 43588 / DSM 3639 / JCM 9404 / F1).